Consider the following 94-residue polypeptide: Cell division topological specificity factor (94 aa).

This sequence belongs to the MinE family.

In terms of biological role, prevents the cell division inhibition by proteins MinC and MinD at internal division sites while permitting inhibition at polar sites. This ensures cell division at the proper site by restricting the formation of a division septum at the midpoint of the long axis of the cell. The polypeptide is Cell division topological specificity factor (Alkaliphilus metalliredigens (strain QYMF)).